Reading from the N-terminus, the 153-residue chain is MSKKYIVTWDMLQIYARELAQKLLPVNQWKGIIAVSRGGLIPSALLARELNIRFVDTICVSSYDHNRLRDLKILKYAAGNSSQIIIVDDLVDTGGTGKIIRNLYPKAKFVTIFAKPMGKLLVDEYIIDIPQKVWIEQPWDMGVTYQSPLVRDL.

5-phospho-alpha-D-ribose 1-diphosphate-binding positions include 37–38 (RG), Arg69, and 88–96 (DDLVDTGGT). Arg69 is a binding site for GMP. Asp89 serves as a coordination point for Mg(2+). Residues Asp92 and Ile135 each coordinate guanine. The xanthine site is built by Asp92 and Ile135. Residues 92–96 (DTGGT) and 134–135 (WI) each bind GMP.

This sequence belongs to the purine/pyrimidine phosphoribosyltransferase family. XGPT subfamily. In terms of assembly, homotetramer. It depends on Mg(2+) as a cofactor.

Its subcellular location is the cell membrane. The enzyme catalyses GMP + diphosphate = guanine + 5-phospho-alpha-D-ribose 1-diphosphate. The catalysed reaction is XMP + diphosphate = xanthine + 5-phospho-alpha-D-ribose 1-diphosphate. It catalyses the reaction IMP + diphosphate = hypoxanthine + 5-phospho-alpha-D-ribose 1-diphosphate. It participates in purine metabolism; GMP biosynthesis via salvage pathway; GMP from guanine: step 1/1. It functions in the pathway purine metabolism; XMP biosynthesis via salvage pathway; XMP from xanthine: step 1/1. Functionally, purine salvage pathway enzyme that catalyzes the transfer of the ribosyl-5-phosphate group from 5-phospho-alpha-D-ribose 1-diphosphate (PRPP) to the N9 position of the 6-oxopurines guanine and xanthine to form the corresponding ribonucleotides GMP (guanosine 5'-monophosphate) and XMP (xanthosine 5'-monophosphate), with the release of PPi. To a lesser extent, also acts on hypoxanthine. In Buchnera aphidicola subsp. Baizongia pistaciae (strain Bp), this protein is Xanthine-guanine phosphoribosyltransferase.